The primary structure comprises 153 residues: MNVGVAHSEVNPNTRVMNSRGIWLAYIILVGLLHMVLLSIPFFSIPVVWTLTNVIHNLATYVFLHTVKGTPFETPDQGKARLLTHWEQMDYGLQFTSSRKFLSISPIVLYLLASFYTKYDAAHFLINTASLLSVLLPKLPQFHGVRVFGINKY.

Over 1–21 (MNVGVAHSEVNPNTRVMNSRG) the chain is Cytoplasmic. A run of 2 helical transmembrane segments spans residues 22–42 (IWLAYIILVGLLHMVLLSIPF) and 43–63 (FSIPVVWTLTNVIHNLATYVF). Residues 64 to 105 (LHTVKGTPFETPDQGKARLLTHWEQMDYGLQFTSSRKFLSIS) are Cytoplasmic-facing. The chain crosses the membrane as a helical span at residues 106–126 (PIVLYLLASFYTKYDAAHFLI). The Extracellular portion of the chain corresponds to 127–153 (NTASLLSVLLPKLPQFHGVRVFGINKY).

It belongs to the ORM family. Ceramide-sensitive subunit of the serine palmitoyltransferase (SPT) complex, which is also composed of SPTLC1, SPTLC2/3 and SPTSSA/B. In terms of tissue distribution, widely expressed. Expressed in adult and fetal heart, brain, lung, liver, skeletal muscle and kidney. Expressed in adult pancreas and placenta and in fetal spleen abd thymus.

Its subcellular location is the endoplasmic reticulum membrane. In terms of biological role, plays an essential role in the homeostatic regulation of sphingolipid de novo biosynthesis by modulating the activity of the serine palmitoyltransferase (SPT) in response to ceramide levels. When complexed to SPT, the binding of ceramides to its N-terminus stabilizes a conformation that block SPT substrate entry, hence preventing SPT catalytic activity. Through this mechanism, maintains ceramide levels at sufficient concentrations for the production of complex sphingolipids, but which prevents the accumulation of ceramides to levels that trigger apoptosis. This chain is ORM1-like protein 2 (ORMDL2), found in Homo sapiens (Human).